The sequence spans 1944 residues: MSNFSEERATMIAAGDLQEFVPFGRDHCKHHPNALNLQLRQLQPASELWSSDGAAGLVGSLQEVTIHEKQKESWQLRKGVSEIGDAADYDEELYVAGNMVIWSKGSKSQALAVYKAFTVDSTVQQALWCDFIISQDKSEKIYKSHELEKCICILQSSCMNMHSIDGKDYIASLPFQVANVWATKYGLLFERCSSSHEVPPSLPREPLPTMFSMLHPLDEITPLVCKSGSLFGSSRVQYVVDPAVKIVFLNIDPSIVMTYDAVQNVHSVWTLRRVKPEEENAVLKFPEQAGTLQNATTSSSLTAHLRSLSKGESPVASPFQNYSSIHSQSRSTSSPSLHSRSPSISNMAALSRAHSPALGVHSFSGAQRFNLSSHSQSPKRHSISHSPSGSFNDSFLAPETEPIVPELCIDHLWTETLPNIREKNSQASKVFITTDLCGQKFLCFLVEAQLQLRCVKFQESNDKTQLIFGSVTNIHAKDAAPVEKIHTMLVLEGNGNLVLYTGVVRVGKVFIPGLPAPSLTMSNMMPRPSTPLDGVGTPKPLSKLLGSMDEVVLLSPVPELRDSSKLNDSLYNEDCTFQQLGTYIHSVRDPVHNRVTLELSNGSMVRITIPEVATSELVQTCLQAIKFILPKEVAIQVLVKWYNVHSAPGGPSCHSEWSLFVICLLNMMGYNTDRLAWTRSFDFEGSLSPVIAPKKARPSDTGSDEDWEYLLNSEYHRNVESHLLNKSLCLTALEVSNAKDEDFSQNLSLDSSTLLFAHIPAIFFVLHLVYEELKLNTLMGEGICSLIDLLVQLARDLKLDSYLDHYYRDSPTLVKTTGQVCTIDQGQMGFMHHPPFFTSEPPSIYQWVSSCLKGEGMPPYPYLPGICERSRLVVLSIALYTLGDESCVSDETCQYLSKVTSTPQKPQAEQEENRFTFRHSASVSVLAERLVVWMASVGFTLRDLETLPFGIALPIRDAIYHCREQPDSDWSEAVCLLIGRQDLSKQACEGNLPRGKSVLSSEVSSGTEAEEEDDGMNDLNHEVMSLIWSEDLRVQDVRRLLQSAQPVRVNVVQYPELSDHEFIEEKENRLLQLCQRTMALPVGRGMFTLFSYHPVPTEPLPVPKLNLTGRAPPRNTTVDLNSGNIDVPPNMASWASFHNGVAAGLKIAPASQIDSAWIVYNKPKHAELANEYAGFLMALGLNGHLTKLATLNIHDYLTKGHEMTSIGLLLGVSAAKLGTMDMSITRLLSIHVPALLPPTSTELDVPHNVQVAAVVGIGLVYQGTAHRHTAEVLLAEIGRPPGPEMEYCTDRESYSLAAGLALGMVCLGHGSNLIGMSDLNVPEQLYQYMVGGHRRFQTGMHREKHKSPSYQIKEGDTINVDVTCPGATLALAMIYLKTNNRSIADWLRAPDTMYLLDFVKPEFLLLRTLARCLILWDDILPNSKWVDSNVPQIIRENSISLSEIELPCSEDLNLETLSQAHVYIIAGACLSLGFRFAGSENLSAFSCLHKFAKDFMNYLSAPNASVTGPYNLETCLSVVLLSLAMVMAGSGNLKVLQLCRFLHMKTGGEMNYGFHLAHHMALGLLFLGGGRYSLSTSNSSIAALLCALYPHFPAHSTDNRYHLQALRHLYVLAAEPRLLVPVDVDTNTPCYALIEVTYKGTQWYEQTKEELMAPTLLPELHLLKQMKVKGPRYWELLIDLSKGEQHLRSILSKDGVLYVKLRAGQLSYKEDPMGWQSLLAQTVANRNSEARAFKPETISSFTSDPALLSFAEYFCKPTVSMGPKQEILDLFSSILYECVAQETPEMLPAYIAMDQALRSLKKRDMSDTSDLWQIKLILEFFSSRSHQDRQHTYPKRGLFINSEFLPVVKCTVDATLDQWLQAGGDVCVHAYLSGQPVEKSQLNMLACFLVYHSVPAPRHLPPMGLEGSTSFAELLYRFRHLKMPVRALLRLAPVLLGNPQPMVM.

2 positions are modified to phosphoserine: Ser51 and Ser60. Position 291 is a phosphothreonine (Thr291). A disordered region spans residues Glu312–Ser343. 7 positions are modified to phosphoserine: Ser313, Ser341, Ser343, Ser355, Ser362, Ser373, and Ser377. Over residues Ser323 to Ser343 the composition is skewed to low complexity. The segment at Asn370–Phe395 is disordered. Polar residues predominate over residues Ser384 to Asp393. Residue Thr537 is modified to Phosphothreonine. Phosphoserine occurs at positions 547 and 555. The residue at position 571 (Tyr571) is a Phosphotyrosine. Residues Ser680, Ser686, and Ser688 each carry the phosphoserine modification. Residues Asn991–Asp1014 form a disordered region. Over residues Val998–Thr1007 the composition is skewed to polar residues. PC repeat units lie at residues Ala1297–Leu1325, Gly1366–Leu1404, Gly1467–Ala1501, and Leu1520–Tyr1552.

The protein belongs to the APC1 family. In terms of assembly, the mammalian APC/C is composed at least of 14 distinct subunits ANAPC1, ANAPC2, CDC27/APC3, ANAPC4, ANAPC5, CDC16/APC6, ANAPC7, CDC23/APC8, ANAPC10, ANAPC11, CDC26/APC12, ANAPC13, ANAPC15 and ANAPC16 that assemble into a complex of at least 19 chains with a combined molecular mass of around 1.2 MDa; APC/C interacts with FZR1 and FBXO5. Phosphorylated. Phosphorylation on Ser-355 occurs specifically during mitosis. As to expression, abundantly expressed in proliferating fibroblasts, juvenile testis, adult brain and epididymis.

The protein operates within protein modification; protein ubiquitination. Its function is as follows. Component of the anaphase promoting complex/cyclosome (APC/C), a cell cycle-regulated E3 ubiquitin ligase that controls progression through mitosis and the G1 phase of the cell cycle. The APC/C complex acts by mediating ubiquitination and subsequent degradation of target proteins: it mainly mediates the formation of 'Lys-11'-linked polyubiquitin chains and, to a lower extent, the formation of 'Lys-48'- and 'Lys-63'-linked polyubiquitin chains. The APC/C complex catalyzes assembly of branched 'Lys-11'-/'Lys-48'-linked branched ubiquitin chains on target proteins. In Mus musculus (Mouse), this protein is Anaphase-promoting complex subunit 1 (Anapc1).